We begin with the raw amino-acid sequence, 300 residues long: MTLAIPLELSLFDPTSADFLVPLISFSAYFSVKSFTMRPCPRLLTRKLNYPGHIPLSPAQNALLAVGSGVVGVLDVTRGDLIASLSESTAGIFLPALHEKMKMTPEGRQIMKDRPEITNKTIEKLKELKRGTLGREYVEWLGGGGLEPESRAPVQYIDSPLLAYTMLRYRQTHDLYHTLFSLPPTLPHELSLKVLEFSNMSLPVALLSSVFGPLRLKRKETWTRDWVPWALRTGREGRSLVTVYWEKRWEQGIGELRRELGVERNDAEGVEARWGGYRKIREVERELRRKGEWVDEPEDW.

Zn(2+) is bound by residues histidine 173, aspartate 174, histidine 177, and glutamate 189.

This sequence belongs to the COQ4 family. Component of a multi-subunit COQ enzyme complex, composed of at least COQ3, COQ4, COQ5, COQ6, COQ7 and COQ9. Requires Zn(2+) as cofactor.

It localises to the mitochondrion inner membrane. The enzyme catalyses a 4-hydroxy-3-methoxy-5-(all-trans-polyprenyl)benzoate + H(+) = a 2-methoxy-6-(all-trans-polyprenyl)phenol + CO2. It participates in cofactor biosynthesis; ubiquinone biosynthesis. Functionally, lyase that catalyzes the C1-decarboxylation of 4-hydroxy-3-methoxy-5-(all-trans-polyprenyl)benzoic acid into 2-methoxy-6-(all-trans-polyprenyl)phenol during ubiquinone biosynthesis. This chain is Ubiquinone biosynthesis protein COQ4, mitochondrial, found in Cryptococcus neoformans var. neoformans serotype D (strain JEC21 / ATCC MYA-565) (Filobasidiella neoformans).